A 291-amino-acid polypeptide reads, in one-letter code: Urease accessory protein UreD (291 aa).

It belongs to the UreD family. In terms of assembly, ureD, UreF and UreG form a complex that acts as a GTP-hydrolysis-dependent molecular chaperone, activating the urease apoprotein by helping to assemble the nickel containing metallocenter of UreC. The UreE protein probably delivers the nickel.

The protein resides in the cytoplasm. Its function is as follows. Required for maturation of urease via the functional incorporation of the urease nickel metallocenter. This Polynucleobacter asymbioticus (strain DSM 18221 / CIP 109841 / QLW-P1DMWA-1) (Polynucleobacter necessarius subsp. asymbioticus) protein is Urease accessory protein UreD.